The sequence spans 392 residues: 4-hydroxy-3-methylbut-2-en-1-yl diphosphate synthase (flavodoxin) (392 aa).

[4Fe-4S] cluster contacts are provided by Cys-280, Cys-283, Cys-315, and Glu-322. The span at 371 to 380 (TEKGSDHCSE) shows a compositional bias: basic and acidic residues. The segment at 371-392 (TEKGSDHCSETTRSGSPVVTVN) is disordered. The span at 381-392 (TTRSGSPVVTVN) shows a compositional bias: polar residues.

It belongs to the IspG family. [4Fe-4S] cluster serves as cofactor.

The catalysed reaction is (2E)-4-hydroxy-3-methylbut-2-enyl diphosphate + oxidized [flavodoxin] + H2O + 2 H(+) = 2-C-methyl-D-erythritol 2,4-cyclic diphosphate + reduced [flavodoxin]. It participates in isoprenoid biosynthesis; isopentenyl diphosphate biosynthesis via DXP pathway; isopentenyl diphosphate from 1-deoxy-D-xylulose 5-phosphate: step 5/6. Functionally, converts 2C-methyl-D-erythritol 2,4-cyclodiphosphate (ME-2,4cPP) into 1-hydroxy-2-methyl-2-(E)-butenyl 4-diphosphate. In Mycobacterium leprae (strain Br4923), this protein is 4-hydroxy-3-methylbut-2-en-1-yl diphosphate synthase (flavodoxin).